Consider the following 385-residue polypeptide: Meiotic recombination protein SPO11-2 (385 aa).

Residues 24–169 (LPPAEVRARI…LGIMASSRGA (146 aa)) enclose the Topo IIA-type catalytic domain. Tyr-126 (O-(5'-phospho-DNA)-tyrosine intermediate) is an active-site residue. Residues Glu-219 and Asp-272 each contribute to the Mg(2+) site.

Belongs to the TOP6A family. As to quaternary structure, interacts with TOP6B. It depends on Mg(2+) as a cofactor. As to expression, highly expressed in flowers before pollination. Expressed in roots and shoots.

It localises to the nucleus. It carries out the reaction ATP-dependent breakage, passage and rejoining of double-stranded DNA.. Required for meiotic recombination. Mediates DNA cleavage that forms the double-strand breaks (DSB) that initiate meiotic recombination. The chain is Meiotic recombination protein SPO11-2 (SPO11-2) from Oryza sativa subsp. indica (Rice).